We begin with the raw amino-acid sequence, 364 residues long: Probable dual-specificity RNA methyltransferase RlmN (364 aa).

Glu-106 (proton acceptor) is an active-site residue. One can recognise a Radical SAM core domain in the interval 112–350 (YPQRNTVCIS…SCTVRDTRGR (239 aa)). Residues Cys-119 and Cys-356 are joined by a disulfide bond. Residues Cys-126, Cys-130, and Cys-133 each contribute to the [4Fe-4S] cluster site. Residues 177–178 (GE), Ser-211, 234–236 (SLH), and Asn-313 contribute to the S-adenosyl-L-methionine site. Catalysis depends on Cys-356, which acts as the S-methylcysteine intermediate.

The protein belongs to the radical SAM superfamily. RlmN family. Requires [4Fe-4S] cluster as cofactor.

It is found in the cytoplasm. The enzyme catalyses adenosine(2503) in 23S rRNA + 2 reduced [2Fe-2S]-[ferredoxin] + 2 S-adenosyl-L-methionine = 2-methyladenosine(2503) in 23S rRNA + 5'-deoxyadenosine + L-methionine + 2 oxidized [2Fe-2S]-[ferredoxin] + S-adenosyl-L-homocysteine. It catalyses the reaction adenosine(37) in tRNA + 2 reduced [2Fe-2S]-[ferredoxin] + 2 S-adenosyl-L-methionine = 2-methyladenosine(37) in tRNA + 5'-deoxyadenosine + L-methionine + 2 oxidized [2Fe-2S]-[ferredoxin] + S-adenosyl-L-homocysteine. Its function is as follows. Specifically methylates position 2 of adenine 2503 in 23S rRNA and position 2 of adenine 37 in tRNAs. The sequence is that of Probable dual-specificity RNA methyltransferase RlmN from Mycobacterium marinum (strain ATCC BAA-535 / M).